The sequence spans 497 residues: 3-octaprenyl-4-hydroxybenzoate carboxy-lyase (497 aa).

Asparagine 175 contacts Mn(2+). Residues 178–180 (IYR), 192–194 (RWL), and 197–198 (RG) contribute to the prenylated FMN site. Residue glutamate 241 participates in Mn(2+) binding. The active-site Proton donor is the aspartate 290.

The protein belongs to the UbiD family. Homohexamer. Prenylated FMN is required as a cofactor. Mn(2+) serves as cofactor.

It localises to the cell membrane. It carries out the reaction a 4-hydroxy-3-(all-trans-polyprenyl)benzoate + H(+) = a 2-(all-trans-polyprenyl)phenol + CO2. It participates in cofactor biosynthesis; ubiquinone biosynthesis. Functionally, catalyzes the decarboxylation of 3-octaprenyl-4-hydroxy benzoate to 2-octaprenylphenol, an intermediate step in ubiquinone biosynthesis. This is 3-octaprenyl-4-hydroxybenzoate carboxy-lyase from Shigella boydii serotype 4 (strain Sb227).